The primary structure comprises 188 residues: ADP-ribosylation factor K (188 aa).

GTP is bound by residues 34–40 (DGAGKST), 75–79 (DVGGQ), and 134–137 (NKQD).

It belongs to the small GTPase superfamily. Arf family.

The protein resides in the golgi apparatus. Functionally, GTP-binding protein that may be involved in protein trafficking. May modulate vesicle budding and uncoating within the Golgi apparatus. This Dictyostelium discoideum (Social amoeba) protein is ADP-ribosylation factor K (arrK).